The following is a 507-amino-acid chain: Histidine--tRNA ligase (507 aa).

The protein belongs to the class-II aminoacyl-tRNA synthetase family. Homodimer.

Its subcellular location is the cytoplasm. The enzyme catalyses tRNA(His) + L-histidine + ATP = L-histidyl-tRNA(His) + AMP + diphosphate + H(+). The polypeptide is Histidine--tRNA ligase (Rhizobium leguminosarum bv. trifolii (strain WSM2304)).